A 216-amino-acid polypeptide reads, in one-letter code: MATRITNQKLSKSSRAWMREHLDDPFVKKAQKEGYRARAAYKLLEIQEKYRLIKPGMTVVDLGAAPGSWSQIAGKLVGSKGLVIASDILAMDTLPDVTFLQGDFREEEVFEKLLNILNGRTVDIVISDMAPNTSGNRAVDQPRQIYLCELALDFAQKVLGPDGQFVVKVFQGSGFDEFRKQVVDSFDVLKTVKPAASRARSKEVFLIGQGRKKALQ.

The S-adenosyl-L-methionine site is built by glycine 67, tryptophan 69, aspartate 87, aspartate 103, and aspartate 128. Lysine 168 functions as the Proton acceptor in the catalytic mechanism.

Belongs to the class I-like SAM-binding methyltransferase superfamily. RNA methyltransferase RlmE family.

Its subcellular location is the cytoplasm. It catalyses the reaction uridine(2552) in 23S rRNA + S-adenosyl-L-methionine = 2'-O-methyluridine(2552) in 23S rRNA + S-adenosyl-L-homocysteine + H(+). Functionally, specifically methylates the uridine in position 2552 of 23S rRNA at the 2'-O position of the ribose in the fully assembled 50S ribosomal subunit. The chain is Ribosomal RNA large subunit methyltransferase E from Acinetobacter baylyi (strain ATCC 33305 / BD413 / ADP1).